The chain runs to 65 residues: Large ribosomal subunit protein bL35 (65 aa).

The tract at residues 1–26 (MPKIKTVRGAAKRFKKTASGGFKRKQ) is disordered. Residues 10–26 (AAKRFKKTASGGFKRKQ) show a composition bias toward basic residues.

It belongs to the bacterial ribosomal protein bL35 family.

This chain is Large ribosomal subunit protein bL35, found in Mannheimia succiniciproducens (strain KCTC 0769BP / MBEL55E).